We begin with the raw amino-acid sequence, 163 residues long: Nucleotide-binding protein GWCH70_0711 (163 aa).

This sequence belongs to the YajQ family.

Its function is as follows. Nucleotide-binding protein. The chain is Nucleotide-binding protein GWCH70_0711 from Geobacillus sp. (strain WCH70).